The sequence spans 97 residues: Cobalt transport protein CbiN (97 aa).

The next 2 membrane-spanning stretches (helical) occupy residues 6 to 26 (VLMI…YSGL) and 68 to 88 (SLLF…FFGY).

This sequence belongs to the CbiN family. As to quaternary structure, forms an energy-coupling factor (ECF) transporter complex composed of an ATP-binding protein (A component, CbiO), a transmembrane protein (T component, CbiQ) and 2 possible substrate-capture proteins (S components, CbiM and CbiN) of unknown stoichimetry.

It localises to the cell membrane. Its pathway is cofactor biosynthesis; adenosylcobalamin biosynthesis. Its function is as follows. Part of the energy-coupling factor (ECF) transporter complex CbiMNOQ involved in cobalt import. The chain is Cobalt transport protein CbiN from Methanococcus maripaludis (strain C6 / ATCC BAA-1332).